A 296-amino-acid polypeptide reads, in one-letter code: Putative mannose 6-phosphate receptor-like protein C530.09c (296 aa).

Residues 1 to 25 (MRLLTCLINVLAGLTLFSQFQRAFG) form the signal peptide. The Lumenal portion of the chain corresponds to 26–206 (LTITRRGFKV…TVKKDSTLNP (181 aa)). The MRH domain maps to 42–197 (PFCALHHPNT…EWKTIHACPT (156 aa)). C44 and C87 are disulfide-bonded. 5 N-linked (GlcNAc...) asparagine glycosylation sites follow: N64, N81, N93, N96, and N143. 2 cysteine pairs are disulfide-bonded: C147–C183 and C163–C195. The helical transmembrane segment at 207–227 (VSVFLLFCAIAFLAYFVGGFV) threads the bilayer. Topologically, residues 228-249 (YQRVVLNARGLRQIPNYEMWRS) are cytoplasmic. The helical transmembrane segment at 250–270 (LFGFISDIVIILYSSILSILP) threads the bilayer. The Lumenal portion of the chain corresponds to 271 to 296 (SSITRMRGNRRNIDYVEDALIDDIDT).

The protein belongs to the MRL1/IGF2R family.

The protein resides in the golgi apparatus. It is found in the trans-Golgi network membrane. Its subcellular location is the endosome membrane. The sequence is that of Putative mannose 6-phosphate receptor-like protein C530.09c from Schizosaccharomyces pombe (strain 972 / ATCC 24843) (Fission yeast).